Consider the following 203-residue polypeptide: Small ribosomal subunit protein uS5 (203 aa).

The span at 1–18 (MENNVKKETIVDSEKVEK) shows a compositional bias: basic and acidic residues. A disordered region spans residues 1-36 (MENNVKKETIVDSEKVEKQQPVTAPVVNKKENTQPK). Residues 49-112 (FEERVVKIKR…KNANNNLIKV (64 aa)) form the S5 DRBM domain.

Belongs to the universal ribosomal protein uS5 family. In terms of assembly, part of the 30S ribosomal subunit. Contacts proteins S4 and S8.

With S4 and S12 plays an important role in translational accuracy. Its function is as follows. Located at the back of the 30S subunit body where it stabilizes the conformation of the head with respect to the body. The sequence is that of Small ribosomal subunit protein uS5 from Ureaplasma urealyticum serovar 10 (strain ATCC 33699 / Western).